We begin with the raw amino-acid sequence, 445 residues long: tRNA(Ile)-lysidine synthase (445 aa).

ATP is bound at residue 19-24 (SGGIDS).

Belongs to the tRNA(Ile)-lysidine synthase family.

The protein localises to the cytoplasm. The catalysed reaction is cytidine(34) in tRNA(Ile2) + L-lysine + ATP = lysidine(34) in tRNA(Ile2) + AMP + diphosphate + H(+). Functionally, ligates lysine onto the cytidine present at position 34 of the AUA codon-specific tRNA(Ile) that contains the anticodon CAU, in an ATP-dependent manner. Cytidine is converted to lysidine, thus changing the amino acid specificity of the tRNA from methionine to isoleucine. The sequence is that of tRNA(Ile)-lysidine synthase from Buchnera aphidicola subsp. Schizaphis graminum (strain Sg).